Consider the following 450-residue polypeptide: Phosphoglucosamine mutase (450 aa).

Residue Ser101 is the Phosphoserine intermediate of the active site. Ser101, Asp240, Asp242, and Asp244 together coordinate Mg(2+). The residue at position 101 (Ser101) is a Phosphoserine.

The protein belongs to the phosphohexose mutase family. Mg(2+) serves as cofactor. Post-translationally, activated by phosphorylation. Phosphorylated by StkP in vivo.

It catalyses the reaction alpha-D-glucosamine 1-phosphate = D-glucosamine 6-phosphate. Its function is as follows. Catalyzes the conversion of glucosamine-6-phosphate to glucosamine-1-phosphate. This chain is Phosphoglucosamine mutase, found in Streptococcus pneumoniae (strain ATCC BAA-255 / R6).